Reading from the N-terminus, the 465-residue chain is Cysteine--tRNA ligase (465 aa).

C28 is a Zn(2+) binding site. The 'HIGH' region signature appears at 30 to 40 (MTVYDYCHLGH). Positions 209, 234, and 238 each coordinate Zn(2+). A 'KMSKS' region motif is present at residues 266–270 (KMSKS). K269 serves as a coordination point for ATP.

It belongs to the class-I aminoacyl-tRNA synthetase family. As to quaternary structure, monomer. Zn(2+) is required as a cofactor.

It is found in the cytoplasm. The catalysed reaction is tRNA(Cys) + L-cysteine + ATP = L-cysteinyl-tRNA(Cys) + AMP + diphosphate. The sequence is that of Cysteine--tRNA ligase from Methylococcus capsulatus (strain ATCC 33009 / NCIMB 11132 / Bath).